The following is a 120-amino-acid chain: FK506-binding protein 1B (120 aa).

Residues 1-24 (MNPPQGVTKTILRPGNGRDSPHTG) are disordered. The PPIase FKBP-type domain maps to 24–120 (GDTVIIDYTG…LVLYVCSPAG (97 aa)).

It belongs to the FKBP-type PPIase family. FKBP1 subfamily.

The catalysed reaction is [protein]-peptidylproline (omega=180) = [protein]-peptidylproline (omega=0). Its function is as follows. PPIases accelerate the folding of proteins. It catalyzes the cis-trans isomerization of proline imidic peptide bonds in oligopeptides. The sequence is that of FK506-binding protein 1B (FKBP3) from Emericella nidulans (strain FGSC A4 / ATCC 38163 / CBS 112.46 / NRRL 194 / M139) (Aspergillus nidulans).